The primary structure comprises 444 residues: uncharacterized protein (444 aa).

Over residues 1–11 the composition is skewed to basic and acidic residues; that stretch reads MASSAGRDKLR. The interval 1–35 is disordered; that stretch reads MASSAGRDKLRSRGQRVFAFGSSTPRDLSHMSKVP.

This is an uncharacterized protein from Caenorhabditis elegans.